A 180-amino-acid chain; its full sequence is NADH-quinone oxidoreductase subunit I (180 aa).

2 4Fe-4S ferredoxin-type domains span residues 46-80 (GRIVLTCDPDGYERCVACNLCAVACPVDCISLQKT) and 90-119 (EFFRINFSRCIFCGLCEEACPTTAIQLTPD). The [4Fe-4S] cluster site is built by cysteine 60, cysteine 63, cysteine 66, cysteine 70, cysteine 99, cysteine 102, cysteine 105, and cysteine 109.

It belongs to the complex I 23 kDa subunit family. As to quaternary structure, NDH-1 is composed of 14 different subunits. Subunits NuoA, H, J, K, L, M, N constitute the membrane sector of the complex. Requires [4Fe-4S] cluster as cofactor.

The protein localises to the cell membrane. It catalyses the reaction a quinone + NADH + 5 H(+)(in) = a quinol + NAD(+) + 4 H(+)(out). In terms of biological role, NDH-1 shuttles electrons from NADH, via FMN and iron-sulfur (Fe-S) centers, to quinones in the respiratory chain. The immediate electron acceptor for the enzyme in this species is believed to be ubiquinone. Couples the redox reaction to proton translocation (for every two electrons transferred, four hydrogen ions are translocated across the cytoplasmic membrane), and thus conserves the redox energy in a proton gradient. The protein is NADH-quinone oxidoreductase subunit I of Baumannia cicadellinicola subsp. Homalodisca coagulata.